A 540-amino-acid polypeptide reads, in one-letter code: Mitochondrial antiviral-signaling protein (540 aa).

Proline 2 is subject to N-acetylproline. The Cytoplasmic portion of the chain corresponds to 2-513 (PFAEDKTYKY…REVPCHRPSP (512 aa)). Glycyl lysine isopeptide (Lys-Gly) (interchain with G-Cter in ubiquitin) cross-links involve residues lysine 7 and lysine 10. The 68-residue stretch at 10–77 (KYICRNFSNF…WVEYFIAALR (68 aa)) folds into the CARD domain. A required for interaction with NLRX1 region spans residues 10–77 (KYICRNFSNF…WVEYFIAALR (68 aa)). The S-palmitoyl cysteine moiety is linked to residue cysteine 79. Positions 95 to 297 (YQPRTSDRPP…EAPANSLPSK (203 aa)) are disordered. A compositionally biased stretch (pro residues) spans 106 to 122 (PLEPPSLPAERPGPPTP). The interaction with TRAF2 stretch occupies residues 143–147 (PVQET). Polar residues-rich tracts occupy residues 145–165 (QETQ…QTLS) and 179–216 (ESSS…SLTP). 5 positions are modified to phosphoserine: serine 152, serine 157, serine 165, serine 180, and serine 188. The interaction with TRAF6 stretch occupies residues 153–158 (PGENSE). Threonine 215 bears the Phosphothreonine mark. Phosphoserine occurs at positions 222 and 233. The residue at position 234 (threonine 234) is a Phosphothreonine. Arginine 236 is modified (asymmetric dimethylarginine). The span at 241 to 266 (PGPTGSVVSTGTSFSSSSPGLASAGA) shows a compositional bias: low complexity. A phosphoserine mark is found at serine 253 and serine 258. Residues lysine 311 and lysine 325 each participate in a glycyl lysine isopeptide (Lys-Gly) (interchain with G-Cter in ubiquitin) cross-link. 2 disordered regions span residues 314 to 358 (ANPA…RAGM) and 373 to 419 (SAST…SELS). Polar residues-rich tracts occupy residues 317-331 (ASVS…TSSK), 339-355 (NALT…NSTR), and 373-382 (SASTVPTDGS). Residues 388-403 (TPAAPTPAGATGGSSA) are compositionally biased toward low complexity. Serine 408 bears the Phosphoserine mark. The pLxIS motif signature appears at 439–442 (LAIS). Serine 442 bears the Phosphoserine; by TBK1 mark. The segment at 455–460 (PEENEY) is interaction with TRAF6. Glycyl lysine isopeptide (Lys-Gly) (interchain with G-Cter in ubiquitin) cross-links involve residues lysine 461 and lysine 500. Lysine 461 is covalently cross-linked ((Microbial infection) Glycyl lysine isopeptide (Lys-Gly) (interchain with G-Cter in UFM1)). The interval 476–507 (IQLLEGNPGPPADPDGGPRPQADRKFQEREVP) is disordered. A compositionally biased stretch (basic and acidic residues) spans 496–507 (QADRKFQEREVP). The helical transmembrane segment at 514 to 534 (GALWLQVAVTGVLVVTLLVVL) threads the bilayer. The Mitochondrial intermembrane portion of the chain corresponds to 535–540 (YRRRLH).

As to quaternary structure, self-associates and polymerizes (via CARD domains) to form 400 nM long three-stranded helical filaments on mitochondria, filament nucleation requires interaction with RIGI whose CARD domains act as a template for filament assembly. Interacts with RIGI, IFIH1/MDA5, TRAF2, TRAF6 and C1QBP. May interact with FADD, RIPK1, CHUK and IKBKB. Interacts (when phosphorylated) with IRF3; following activation and phosphorylation on the pLxIS motif by TBK1, recruits IRF3. Interacts with NLRX1. Interaction with NLRX1 requires the CARD domain. Interacts with PSMA7. Interacts with TRAFD1. Interacts (via C-terminus) with PCBP2 in a complex containing MAVS/IPS1, PCBP2 and ITCH. Interacts with CYLD. Interacts with SRC. Interacts with DHX58/LGP2 and IKBKE. Interacts with STING1. Interacts with IFIT3 (via N-terminus). Interacts with TBK1 only in the presence of IFIT3. Interacts with TTLL12; the interaction prevents MAVS binding to TBK1 and IKBKE. Interacts with MUL1. Interacts with ANKRD17. Interacts with NDFIP1. Interacts with SMURF1; the interaction is mediated by NDFIP1 and leads to MAVS ubiquitination and degradation. Interacts with UBXN1; this interaction inhibits MAVS-mediated antiviral pathway. Interacts (via C-terminus) with GPATCH3; the interaction is markedly increased upon viral infection. Directly interacts (via CARD domain) with ATG5 and ATG12, either as ATG5 and ATG12 monomers or as ATG12-ATG5 conjugates. Interacts with DHX33 (via the helicase C-terminal domain). Interacts with DDX3X (via C-terminus); this interaction occurs rapidly, but transiently after Sendai virus infection. The interaction with DDX3X potentiates MAVS-mediated IFNB induction. Conversely inhibition of this interaction, for instance by HCV core protein, prevents MAVS-mediated IFNB induction. Transiently interacts with TRAF3 early during Sendai virus infection. Interacts with CLPB; the interaction is enhanced by Sendai virus infection. Interacts with TRAF3IP3. Interacts with TOMM70; the interaction is enhanced by Sendai virus infection. Interacts with ZNFX1. Interacts with N4BP3; this interaction promotes the polyubiquitination of MAVS. Interacts with TAX1BP1; this interaction induces MAVS polyubiquitination. Interacts with NLRP3; promoting NLRP3 recruitment to mitochondria and activation of the NLRP3 inflammasome. Interacts with ECSIT; this interaction bridges RIGI to the MAVS complex at the mitochondrion. Interacts with UBL7; this interaction promotes MAVS 'Lys-27'-linked ubiquitination leading to type I interferon production. Interacts (via transmembrane domain) with SMIM30/MAVI1 (via transmembrane domain); the interaction disrupts MAVS interaction with RIGI and inhibits MAVS aggregation, resulting in the repression of type I interferon signaling and innate immune responses. (Microbial infection) Interacts with hepatitis C virus (HCV) NS3/4A protease; this interaction leads to MAVS cleavage, thereby preventing the establishment of an antiviral state. In terms of assembly, (Microbial infection) Interacts with hepatitis GB virus B NS3/4A protease; this interaction leads to MAVS cleavage. As to quaternary structure, (Microbial infection) Interacts with human respiratory syncytial virus/HRSV protein NS1; this interaction disrupts MAVS binding to RIGI. (Microbial infection) Interacts with Andes virus Nnon-structural protein NS-S; this interaction may reduce MAVS ubiquitination and leads to inhibition of MAVS-induced type-I IFN signaling pathway. In terms of assembly, (Microbial infection) Interacts with Seneca Valley virus protease 3C; this interaction allows the cleavage of MAVS and subsequent suppression of host innate immunity. As to quaternary structure, (Microbial infection) Interacts with SARS-CoV virus protein ORF9b; this interaction mediates MAVS proteasomal degradation. (Microbial infection) Interacts with SARS-CoV-2 virus protein M; this interaction impairs MAVS self-association and its recruitment of downstream components. In terms of assembly, (Microbial infection) Interacts with foot-and-mouth disease virus protein VP1; this interaction competes with TRAF3 interaction to MAVS leading to suppression of host innate immunity. As to quaternary structure, (Microbial infection) Interacts with Epstein-Barr virus protein BILF1; this interaction mediates MAVS routing from mitochondria to lysosomes. Post-translationally, following activation, phosphorylated by TBK1 at Ser-442 in the pLxIS motif. The phosphorylated pLxIS motif constitutes an IRF3-binding motif, leading to recruitment of the transcription factor IRF3 to induce type-I interferons and other cytokines. Ubiquitinated. Undergoes 'Lys-48'-linked polyubiquitination catalyzed by ITCH; ITCH-dependent polyubiquitination is mediated by the interaction with PCBP2 and leads to MAVS/IPS1 proteasomal degradation. Ubiquitinated by RNF125, leading to its degradation by the proteasome. Undergoes 'Lys-48'-linked ubiquitination catalyzed by SMURF1. Undergoes 'Lys-48'-linked ubiquitination catalyzed by MARCHF5 at Lys-7 and Lys-500, leading to proteasomal degradation. Ubiquitinated via 'Lys-63'-linked ubiquitination at Lys-10, Lys-311 and Lys-461 by UBE2N and TRIM31, promoting MAVS polymerization and formation of three-stranded helical filaments on mitochondria. Undergoes 'Lys-63'-linked ubiquitination leading to enhanced interaction between MAVS and TRAF2. Undergoes 'Lys-27'-linked ubiquitination by TRIM21 leading to enhanced interaction between MAVS and TBK1. Deubiquitinated by USP10 leading to attenuation of RIGI-mediated MAVS aggregation and production of type I interferon. Undergoes 'Lys-48'-linked polyubiquitination catalyzed by RNF115 leading to its degradation. In terms of processing, palmitoylated by ZHDDC4. Palmitoylation promotes MAVS stabilization and activation by inhibiting 'Lys-48'- but facilitating 'Lys-63'-linked ubiquitination. Post-translationally, proteolytically cleaved by apoptotic caspases during apoptosis, leading to its inactivation. Cleavage by CASP3 during virus-induced apoptosis inactivates it, preventing cytokine overproduction. (Microbial infection) Cleaved and degraded by hepatitis A virus (HAV) protein 3ABC allowing the virus to disrupt the activation of host IRF3 through the MDA5 pathway. In terms of processing, (Microbial infection) Cleaved by the protease 2A of coxsackievirus B3, poliovirus and enterovirus 71 allowing the virus to disrupt the host type I interferon production. Post-translationally, (Microbial infection) Cleaved by Seneca Valley virus protease 3C allowing the virus to suppress interferon type-I production. (Microbial infection) Cleaved by HCV protease NS3/4A, thereby preventing the establishment of an antiviral state. In terms of processing, (Microbial infection) UFMylated by ULF1 in association with Epstein-Barr virus BILF1; leading to MAVS routing to the lysosome. As to expression, present in T-cells, monocytes, epithelial cells and hepatocytes (at protein level). Ubiquitously expressed, with highest levels in heart, skeletal muscle, liver, placenta and peripheral blood leukocytes.

The protein resides in the mitochondrion outer membrane. Its subcellular location is the mitochondrion. It localises to the peroxisome. Functionally, adapter required for innate immune defense against viruses. Acts downstream of DHX33, RIGI and IFIH1/MDA5, which detect intracellular dsRNA produced during viral replication, to coordinate pathways leading to the activation of NF-kappa-B, IRF3 and IRF7, and to the subsequent induction of antiviral cytokines such as IFNB and RANTES (CCL5). Peroxisomal and mitochondrial MAVS act sequentially to create an antiviral cellular state. Upon viral infection, peroxisomal MAVS induces the rapid interferon-independent expression of defense factors that provide short-term protection, whereas mitochondrial MAVS activates an interferon-dependent signaling pathway with delayed kinetics, which amplifies and stabilizes the antiviral response. May activate the same pathways following detection of extracellular dsRNA by TLR3. May protect cells from apoptosis. Involved in NLRP3 inflammasome activation by mediating NLRP3 recruitment to mitochondria. This Homo sapiens (Human) protein is Mitochondrial antiviral-signaling protein.